Consider the following 440-residue polypeptide: Ribulose bisphosphate carboxylase large chain (440 aa).

Lys4 bears the N6,N6,N6-trimethyllysine mark. Residues Asn113 and Thr163 each coordinate substrate. The active-site Proton acceptor is Lys165. Position 167 (Lys167) interacts with substrate. Mg(2+) contacts are provided by Lys191, Asp193, and Glu194. The residue at position 191 (Lys191) is an N6-carboxylysine. His284 acts as the Proton acceptor in catalysis. Residues Arg285, His317, and Ser369 each contribute to the substrate site.

It belongs to the RuBisCO large chain family. Type I subfamily. As to quaternary structure, heterohexadecamer of 8 large chains and 8 small chains; disulfide-linked. The disulfide link is formed within the large subunit homodimers. Mg(2+) serves as cofactor. In terms of processing, the disulfide bond which can form in the large chain dimeric partners within the hexadecamer appears to be associated with oxidative stress and protein turnover.

Its subcellular location is the plastid. It localises to the chloroplast. It carries out the reaction 2 (2R)-3-phosphoglycerate + 2 H(+) = D-ribulose 1,5-bisphosphate + CO2 + H2O. The catalysed reaction is D-ribulose 1,5-bisphosphate + O2 = 2-phosphoglycolate + (2R)-3-phosphoglycerate + 2 H(+). RuBisCO catalyzes two reactions: the carboxylation of D-ribulose 1,5-bisphosphate, the primary event in carbon dioxide fixation, as well as the oxidative fragmentation of the pentose substrate in the photorespiration process. Both reactions occur simultaneously and in competition at the same active site. The sequence is that of Ribulose bisphosphate carboxylase large chain from Ptychomitrium gardneri (Gardner's ptychomitrium moss).